The chain runs to 133 residues: Putative pre-16S rRNA nuclease (133 aa).

Belongs to the YqgF nuclease family.

It is found in the cytoplasm. In terms of biological role, could be a nuclease involved in processing of the 5'-end of pre-16S rRNA. This is Putative pre-16S rRNA nuclease from Bordetella pertussis (strain Tohama I / ATCC BAA-589 / NCTC 13251).